Here is a 492-residue protein sequence, read N- to C-terminus: N-succinylglutamate 5-semialdehyde dehydrogenase (492 aa).

220-225 (GSASTG) provides a ligand contact to NAD(+). Residues glutamate 243 and cysteine 277 contribute to the active site.

It belongs to the aldehyde dehydrogenase family. AstD subfamily.

It carries out the reaction N-succinyl-L-glutamate 5-semialdehyde + NAD(+) + H2O = N-succinyl-L-glutamate + NADH + 2 H(+). Its pathway is amino-acid degradation; L-arginine degradation via AST pathway; L-glutamate and succinate from L-arginine: step 4/5. Functionally, catalyzes the NAD-dependent reduction of succinylglutamate semialdehyde into succinylglutamate. The polypeptide is N-succinylglutamate 5-semialdehyde dehydrogenase (Salmonella enteritidis PT4 (strain P125109)).